We begin with the raw amino-acid sequence, 293 residues long: Insulin-like growth factor-binding protein 3 (293 aa).

The N-terminal stretch at 1–27 (MQRARPALWAAALIALALLRGPPAARA) is a signal peptide. An IGFBP N-terminal domain is found at 36–119 (PVVRCEPCDA…LDGRGICANA (84 aa)). Intrachain disulfides connect C40–C69, C43–C71, C51–C72, C60–C75, C83–C96, and C90–C116. N-linked (GlcNAc...) asparagine glycans are attached at residues N118 and N138. 2 disordered regions span residues 132 to 166 (APPAPGNGSESEEDRSVDSMENQALPSTHRVPDSK) and 178 to 213 (KKGHAKDSQRYKVDYESQSTDTQNFSSESKRETEYG). A Phosphoserine modification is found at S150. A compositionally biased stretch (basic and acidic residues) spans 178–192 (KKGHAKDSQRYKVDY). Residues 193-204 (ESQSTDTQNFSS) are compositionally biased toward polar residues. A glycan (N-linked (GlcNAc...) asparagine) is linked at N201. Phosphoserine is present on S203. The 76-residue stretch at 212-287 (YGPCRREMED…DVKGKGDVHC (76 aa)) folds into the Thyroglobulin type-1 domain. 3 cysteine pairs are disulfide-bonded: C215–C242, C253–C264, and C266–C287.

As to quaternary structure, interacts with XLKD1. Binds IGF2 more than IGF1. Forms a ternary complex of about 140 to 150 kDa with IGF1 or IGF2 and a 85 kDa glycoprotein (ALS). Interacts with humanin; humanin competes with importin KPNB1 for binding to IGFBP3, blocking IGFBP3 nuclear import and IGFBP3-mediated apoptosis. Interacts with TMEM219. Interacts with RXRA; this interaction modulates the transcriptional activity of RXRA. Interacts with LRP1; this interaction mediates cell growth inhibition independent of IGF1. Phosphorylated by FAM20C in the extracellular medium. Phosphorylated by CK2; resulting in decreased nuclear localization.

The protein resides in the secreted. It localises to the nucleus. In terms of biological role, multifunctional protein that plays a critical role in regulating the availability of IGFs such as IGF1 and IGF2 to their receptors and thereby regulates IGF-mediated cellular processes including proliferation, differentiation, and apoptosis in a cell-type specific manner. Also exhibits IGF-independent antiproliferative and apoptotic effects mediated by its receptor TMEM219/IGFBP-3R. Inhibits the positive effect of humanin on insulin sensitivity. Promotes testicular germ cell apoptosis. Acts via LRP-1/alpha2M receptor, also known as TGF-beta type V receptor, to mediate cell growth inhibition independent of IGF1. Mechanistically, induces serine-specific dephosphorylation of IRS1 or IRS2 upon ligation to its receptor, leading to the inhibitory cascade. In the nucleus, interacts with transcription factors such as retinoid X receptor-alpha/RXRA to regulate transcriptional signaling and apoptosis. This chain is Insulin-like growth factor-binding protein 3 (IGFBP3), found in Sus scrofa (Pig).